The chain runs to 353 residues: Nicotinate-nucleotide--dimethylbenzimidazole phosphoribosyltransferase (353 aa).

The active-site Proton acceptor is Glu-318.

The protein belongs to the CobT family.

The catalysed reaction is 5,6-dimethylbenzimidazole + nicotinate beta-D-ribonucleotide = alpha-ribazole 5'-phosphate + nicotinate + H(+). Its pathway is nucleoside biosynthesis; alpha-ribazole biosynthesis; alpha-ribazole from 5,6-dimethylbenzimidazole: step 1/2. Catalyzes the synthesis of alpha-ribazole-5'-phosphate from nicotinate mononucleotide (NAMN) and 5,6-dimethylbenzimidazole (DMB). This chain is Nicotinate-nucleotide--dimethylbenzimidazole phosphoribosyltransferase, found in Geobacter metallireducens (strain ATCC 53774 / DSM 7210 / GS-15).